The sequence spans 308 residues: Tetraacyldisaccharide 4'-kinase (308 aa).

63 to 70 (SFGGNGKT) is an ATP binding site.

The protein belongs to the LpxK family.

It carries out the reaction a lipid A disaccharide + ATP = a lipid IVA + ADP + H(+). Its pathway is glycolipid biosynthesis; lipid IV(A) biosynthesis; lipid IV(A) from (3R)-3-hydroxytetradecanoyl-[acyl-carrier-protein] and UDP-N-acetyl-alpha-D-glucosamine: step 6/6. Functionally, transfers the gamma-phosphate of ATP to the 4'-position of a tetraacyldisaccharide 1-phosphate intermediate (termed DS-1-P) to form tetraacyldisaccharide 1,4'-bis-phosphate (lipid IVA). In Campylobacter jejuni subsp. jejuni serotype O:6 (strain 81116 / NCTC 11828), this protein is Tetraacyldisaccharide 4'-kinase.